Here is a 78-residue protein sequence, read N- to C-terminus: Conotoxin 1 (78 aa).

Positions 1–22 are cleaved as a signal peptide; that stretch reads MKLTCMMFVAVLFLTASVFITA. Positions 23–51 are excised as a propeptide; sequence DDSRNGIENLPRMRRHEMKNPKASKLNKR. Gln-52 carries the pyrrolidone carboxylic acid modification. 3 disulfide bridges follow: Cys-53–Cys-69, Cys-60–Cys-73, and Cys-68–Cys-77.

Belongs to the conotoxin O1 superfamily. Expressed by the venom duct.

Its subcellular location is the secreted. The sequence is that of Conotoxin 1 from Conus imperialis (Imperial cone).